Reading from the N-terminus, the 151-residue chain is Putative pre-16S rRNA nuclease (151 aa).

Belongs to the YqgF nuclease family.

The protein localises to the cytoplasm. In terms of biological role, could be a nuclease involved in processing of the 5'-end of pre-16S rRNA. In Pelagibacter ubique (strain HTCC1062), this protein is Putative pre-16S rRNA nuclease.